Reading from the N-terminus, the 249-residue chain is 3alpha-hydroxy bile acid-CoA-ester 3-dehydrogenase 1/3 (249 aa).

NAD(+)-binding positions include 15–18 (TRGI), Glu38, Glu42, and Asn92. Residue Ser144 participates in substrate binding. Active-site proton donor/acceptor residues include Tyr157 and Lys161. NAD(+) is bound by residues Lys161 and 190–192 (VDT).

This sequence belongs to the short-chain dehydrogenases/reductases (SDR) family. As to quaternary structure, homotetramer.

The catalysed reaction is a 3alpha-hydroxy bile acid CoA + NAD(+) = a 3-oxo bile acid CoA + NADH + H(+). It carries out the reaction choloyl-CoA + NAD(+) = 7alpha,12alpha-dihydroxy-3-oxochol-24-oyl-CoA + NADH + H(+). The enzyme catalyses chenodeoxycholoyl-CoA + NAD(+) = 7alpha-hydroxy-3-oxochol-24-oyl-CoA + NADH + H(+). It catalyses the reaction deoxycholoyl-CoA + NAD(+) = 12alpha-hydroxy-3-oxocholan-24-oyl-CoA + NADH + H(+). The catalysed reaction is lithocholoyl-CoA + NAD(+) = 3-oxocholan-24-oyl-CoA + NADH + H(+). The protein operates within lipid metabolism; bile acid biosynthesis. Involved in the multi-step bile acid 7alpha-dehydroxylation pathway that transforms primary bile acids to secondary bile acids in the human gut. Catalyzes the oxidation of C3-hydroxyl group of CoA conjugated bile acids generating a C3-oxo bile acid intermediate. Can use choloyl-CoA, chenodeoxycholoyl-CoA, deoxycholoyl-CoA, and lithocholoyl-CoA as substrates with similar efficiency. Highly prefers NAD over NADP as cosubstrate. Also catalyzes the reverse reactions; in vitro, the preferred direction of reaction depends on the pH. Has very little activity with unconjugated (non-CoA) bile acid substrates. This Clostridium scindens (strain JCM 10418 / VPI 12708) protein is 3alpha-hydroxy bile acid-CoA-ester 3-dehydrogenase 1/3 (baiA1).